The following is a 163-amino-acid chain: Lipoprotein signal peptidase (163 aa).

A run of 3 helical transmembrane segments spans residues 8–28 (FFLL…YWVM), 61–81 (FSHW…LWLW), and 93–113 (FGFT…ICFY). Residues Asp-117 and Asp-136 contribute to the active site. A helical transmembrane segment spans residues 128-148 (YFAVFNLADTFITLGVIAIII).

Belongs to the peptidase A8 family.

It is found in the cell inner membrane. It catalyses the reaction Release of signal peptides from bacterial membrane prolipoproteins. Hydrolyzes -Xaa-Yaa-Zaa-|-(S,diacylglyceryl)Cys-, in which Xaa is hydrophobic (preferably Leu), and Yaa (Ala or Ser) and Zaa (Gly or Ala) have small, neutral side chains.. It functions in the pathway protein modification; lipoprotein biosynthesis (signal peptide cleavage). Its function is as follows. This protein specifically catalyzes the removal of signal peptides from prolipoproteins. The protein is Lipoprotein signal peptidase of Bartonella henselae (strain ATCC 49882 / DSM 28221 / CCUG 30454 / Houston 1) (Rochalimaea henselae).